Consider the following 309-residue polypeptide: Probable manganese-dependent inorganic pyrophosphatase (309 aa).

Mn(2+) contacts are provided by His-9, Asp-13, Asp-15, Asp-75, His-97, and Asp-149.

It belongs to the PPase class C family. Requires Mn(2+) as cofactor.

The protein resides in the cytoplasm. It catalyses the reaction diphosphate + H2O = 2 phosphate + H(+). The polypeptide is Probable manganese-dependent inorganic pyrophosphatase (Bacillus anthracis (strain CDC 684 / NRRL 3495)).